Consider the following 188-residue polypeptide: MVKVLVVAFGGQYNHLIKRSIERIGHEAALRPYNLPPPDEGEFDCVVFGGGPLTMPKDFDKVKGLEAYLRWKKPLLGICLGHQVLALLNGGEVGPSPKPEYGDVTIFVDDEDDILRGLAPSFRAWESHNEEVLREPPNSKVIAHSENTRVQALKYYNGPYYGVQFHPEVQHTEKGSLVFQNFVELCKR.

In terms of domain architecture, Glutamine amidotransferase type-1 spans 3 to 188 (KVLVVAFGGQ…FQNFVELCKR (186 aa)). C79 functions as the Nucleophile in the catalytic mechanism. Active-site residues include H166 and E168.

As to quaternary structure, heterodimer composed of a glutamine amidotransferase subunit (A) and a GMP-binding subunit (B).

It catalyses the reaction XMP + L-glutamine + ATP + H2O = GMP + L-glutamate + AMP + diphosphate + 2 H(+). It functions in the pathway purine metabolism; GMP biosynthesis; GMP from XMP (L-Gln route): step 1/1. Functionally, catalyzes the synthesis of GMP from XMP. In Ignicoccus hospitalis (strain KIN4/I / DSM 18386 / JCM 14125), this protein is GMP synthase [glutamine-hydrolyzing] subunit A.